The primary structure comprises 238 residues: Probable transcriptional regulatory protein YcdB (238 aa).

It belongs to the TACO1 family. YeeN subfamily.

Its subcellular location is the cytoplasm. The chain is Probable transcriptional regulatory protein YcdB (ycdB) from Lactococcus lactis subsp. lactis (strain IL1403) (Streptococcus lactis).